An 88-amino-acid polypeptide reads, in one-letter code: Long neurotoxin LNTX-2 (88 aa).

Positions 1–21 are cleaved as a signal peptide; that stretch reads MKTLLLTLVVVTIVCLDFGYA. Intrachain disulfides connect C24–C42, C35–C63, C67–C78, and C79–C84.

This sequence belongs to the three-finger toxin family. Long-chain subfamily. Type II alpha-neurotoxin sub-subfamily. In terms of tissue distribution, expressed by the venom gland.

It localises to the secreted. Its function is as follows. Binds with high affinity to muscular nicotinic acetylcholine receptors (nAChRs), whereas it binds with a low affinity to neuronal alpha-7/CHRNA7 nAChRs. The sequence is that of Long neurotoxin LNTX-2 from Demansia vestigiata (Lesser black whip snake).